Reading from the N-terminus, the 168-residue chain is Protein OPG162 (168 aa).

Residues Met1–Lys14 are Intravirion-facing. Residues Leu15–His37 form a helical membrane-spanning segment. Residues Tyr38 to Lys168 are Virion surface-facing. A C-type lectin domain is found at Tyr54–Val163. 2 disulfide bridges follow: Cys75/Cys162 and Cys141/Cys154. Asn133 carries an N-linked (GlcNAc...) asparagine; by host glycan.

It belongs to the orthopoxvirus OPG162 protein family. Interacts with protein OPG161. Interacts with protein OPG164. Interacts with protein OPG190.

The protein localises to the virion membrane. It localises to the host Golgi apparatus. Its function is as follows. Forms a complex with OPG162 and OPG190 to coordinate the incorporation of OPG164 into wrapped enveloped virion (EV) membranes and, subsequently, the production of actin tails. Therefore plays an essential role in efficient cell-to-cell spread of viral particles. This is Protein OPG162 (OPG162) from Homo sapiens (Human).